A 376-amino-acid chain; its full sequence is Fibromodulin (376 aa).

The N-terminal stretch at 1 to 18 is a signal peptide; the sequence is MQWASILLLAGLCSLSWA. Gln19 carries the pyrrolidone carboxylic acid modification. Sulfotyrosine occurs at positions 20, 38, 45, 47, 50, 53, 55, 63, and 65. Residues 67–105 enclose the LRRNT domain; sequence SPPQPEPRDCPQECDCPPNFPTAMYCDNRNLKYLPFVPS. LRR repeat units follow at residues 106–127, 130–151, 156–176, 177–198, 201–222, 224–245, 246–266, and 269–289; these read RMKY…VFDN, GLLW…KKVF, HLER…PLPR, SLRE…ALEG, NLTA…MKGL, SLIL…LPSA, LEQL…YFRG, and KLLY…ASNT. N-linked (GlcNAc...) (keratan sulfate) asparagine glycosylation occurs at Asn127. N-linked (GlcNAc...) (keratan sulfate) asparagine glycosylation is present at Asn166. Asn201 carries an N-linked (GlcNAc...) (keratan sulfate) asparagine glycan. An N-linked (GlcNAc...) (keratan sulfate) asparagine glycan is attached at Asn291. 2 LRR repeats span residues 294 to 315 and 316 to 335; these read SLLE…STNL and ENLY…SFCT. A disulfide bond links Cys334 and Cys367. The N-linked (GlcNAc...) asparagine glycan is linked to Asn341. The stretch at 344–365 is one LRR 11 repeat; the sequence is KLQVLRLDGNEIKRSAMPADAP.

The protein belongs to the small leucine-rich proteoglycan (SLRP) family. SLRP class II subfamily. As to quaternary structure, binds to type I and type II collagen. In terms of processing, binds keratan sulfate chains.

Its subcellular location is the secreted. It localises to the extracellular space. The protein resides in the extracellular matrix. Its function is as follows. Affects the rate of fibrils formation. May have a primary role in collagen fibrillogenesis. The chain is Fibromodulin (FMOD) from Bos taurus (Bovine).